Here is a 67-residue protein sequence, read N- to C-terminus: uncharacterized protein (67 aa).

Residues 19-39 traverse the membrane as a helical segment; sequence ISFIIFFFFYFFFFYFFYGFW.

The protein localises to the membrane. This is an uncharacterized protein from Dictyostelium discoideum (Social amoeba).